A 343-amino-acid polypeptide reads, in one-letter code: uncharacterized protein (343 aa).

This is an uncharacterized protein from Saccharolobus islandicus (Sulfolobus islandicus).